Reading from the N-terminus, the 147-residue chain is Ribonuclease H (147 aa).

Positions 3–145 (TEDRVEIYTD…ADQLANKGVE (143 aa)) constitute an RNase H type-1 domain. Mg(2+)-binding residues include D12, E50, D72, and D137.

The protein belongs to the RNase H family. As to quaternary structure, monomer. The cofactor is Mg(2+).

The protein resides in the cytoplasm. The enzyme catalyses Endonucleolytic cleavage to 5'-phosphomonoester.. Its function is as follows. Endonuclease that specifically degrades the RNA of RNA-DNA hybrids. The chain is Ribonuclease H from Chromobacterium violaceum (strain ATCC 12472 / DSM 30191 / JCM 1249 / CCUG 213 / NBRC 12614 / NCIMB 9131 / NCTC 9757 / MK).